Here is a 1198-residue protein sequence, read N- to C-terminus: Sterol 3-beta-glucosyltransferase (1198 aa).

Residues 1–11 (MPITQIISASD) show a composition bias toward polar residues. Disordered stretches follow at residues 1–89 (MPIT…DNAD) and 124–162 (SQVD…PEVP). Over residues 35-51 (RHHRLSRSLSKFKRWRG) the composition is skewed to basic residues. Residues 52-67 (RSNSSLSMGSSEQQEL) are compositionally biased toward low complexity. Ser-76 bears the Phosphoserine mark. A compositionally biased stretch (basic and acidic residues) spans 146 to 162 (VKSKKENLKTKSHPEVP). Residues 187–236 (AKLRQRFCLDEQEPFLNDFPAWLLKDVLVQGHIFITTKHFLFFAYLPKNP) enclose the GRAM 1 domain. Residues 238 to 336 (SVKMSGNLNI…WVNALKKEQF (99 aa)) form the PH domain. The disordered stretch occupies residues 427–465 (KSSFGKETPATAEQKNNGEDSKYLNVPTSAVPSSENGKK). Residues 452–461 (VPTSAVPSSE) are compositionally biased toward polar residues. The 67-residue stretch at 570 to 636 (ERFRYHFKFN…VDVETCYKEK (67 aa)) folds into the GRAM 2 domain. Ser-693 carries the phosphoserine modification. Ser-749, Arg-750, Asp-752, Asn-1025, Asn-1053, Val-1054, His-1056, His-1069, Ser-1072, Gly-1073, Thr-1074, Asp-1093, and Gln-1094 together coordinate UDP-alpha-D-glucose.

This sequence belongs to the glycosyltransferase 28 family.

The protein resides in the cytoplasm. The protein localises to the membrane. It carries out the reaction a sterol + UDP-alpha-D-glucose = a sterol 3-beta-D-glucoside + UDP + H(+). The enzyme catalyses ergosterol + UDP-alpha-D-glucose = ergosteryl 3-beta-D-glucoside + UDP + H(+). Sterol glycosyltransferase responsible for the glycosylation of ergosterol to form ergosterol-glucoside. Also shows activity in vitro on other sterols such as cholesterol, beta-sitosterol, stigmasterol and tomatidine. In contrasts to what is observed in Pichia pastoris and Aspergillus oryzae, is not involved in cytoplasm to vacuole transport (Cvt), pexophagy or nonselective autophagy in Saccharomyces cerevisiae. This is Sterol 3-beta-glucosyltransferase from Saccharomyces cerevisiae (strain YJM789) (Baker's yeast).